Consider the following 948-residue polypeptide: Probable disease resistance protein At5g47260 (948 aa).

Residues Arg-20–Ile-57 adopt a coiled-coil conformation. Residues His-134 to Arg-432 enclose the NB-ARC domain. Gly-176 to Thr-183 lines the ATP pocket. LRR repeat units lie at residues Met-498–Ser-519, Glu-520–Trp-542, Gly-545–Leu-567, Leu-569–Lys-591, Ser-592–Leu-614, Asn-615–Gln-636, Ser-640–Gln-661, Ser-666–Asn-686, and Ser-690–Thr-711.

Belongs to the disease resistance NB-LRR family.

Potential disease resistance protein. The protein is Probable disease resistance protein At5g47260 of Arabidopsis thaliana (Mouse-ear cress).